A 706-amino-acid polypeptide reads, in one-letter code: Probable protein S-acyltransferase 20 (706 aa).

2 consecutive transmembrane segments (helical) span residues 16-36 (VIAITVFCLLVVAFYAFFAPF) and 41-61 (IWEYVLIGVYSPVAILVFVLY). One can recognise a DHHC domain in the interval 172-222 (LFCTLCNCEVRKFSKHCRSCDKCVDCFDHHCKWLNNCVGRKNYVTFVSLMS). Catalysis depends on Cys202, which acts as the S-palmitoyl cysteine intermediate. 2 consecutive transmembrane segments (helical) span residues 220–240 (LMSASLLWLIIEAAVGIAVIV) and 275–295 (AVAIFACFPLGELLFFHMLLI). 3 disordered regions span residues 470–505 (SSLSRNSFAPSQGSRDEYDTGSHGMSNLSSPSHVHE), 591–621 (LNPSSQTASTQNPRPILPAHDSSSGSSALRD), and 680–706 (RDSTSNQLPVFAPGGLGANSQTGSNIK). Polar residues-rich tracts occupy residues 492–501 (HGMSNLSSPS), 591–603 (LNPSSQTASTQNP), and 697–706 (ANSQTGSNIK).

Belongs to the DHHC palmitoyltransferase family.

It is found in the cell membrane. It localises to the cytoplasmic vesicle membrane. The catalysed reaction is L-cysteinyl-[protein] + hexadecanoyl-CoA = S-hexadecanoyl-L-cysteinyl-[protein] + CoA. Its function is as follows. Palmitoyl acyltransferase. The chain is Probable protein S-acyltransferase 20 (PAT20) from Arabidopsis thaliana (Mouse-ear cress).